Here is a 100-residue protein sequence, read N- to C-terminus: Integration host factor subunit alpha (100 aa).

The protein belongs to the bacterial histone-like protein family. In terms of assembly, heterodimer of an alpha and a beta chain.

This protein is one of the two subunits of integration host factor, a specific DNA-binding protein that functions in genetic recombination as well as in transcriptional and translational control. This chain is Integration host factor subunit alpha, found in Hahella chejuensis (strain KCTC 2396).